The sequence spans 464 residues: Cytochrome P450 85A1 (464 aa).

A helical transmembrane segment spans residues 2-22; that stretch reads AFFLIFLSSFFGLCIFCTALL. Residue cysteine 414 participates in heme binding.

This sequence belongs to the cytochrome P450 family. Heme is required as a cofactor. Expressed in sub-meristematic regions of shoot and root apexes, in zones undergoing lateral root formation, in fruits, and in all flower parts, with a high expression in young flower buds and at the joint in the pedicel.

The protein resides in the membrane. The catalysed reaction is 6-deoxocastasterone + reduced [NADPH--hemoprotein reductase] + O2 = 6alpha-hydroxycastasterone + oxidized [NADPH--hemoprotein reductase] + H2O + H(+). It carries out the reaction 6alpha-hydroxycastasterone + reduced [NADPH--hemoprotein reductase] + O2 = castasterone + oxidized [NADPH--hemoprotein reductase] + 2 H2O + H(+). The enzyme catalyses 6-deoxocastasterone + 2 reduced [NADPH--hemoprotein reductase] + 2 O2 = castasterone + 2 oxidized [NADPH--hemoprotein reductase] + 3 H2O + 2 H(+). Its pathway is plant hormone biosynthesis; brassinosteroid biosynthesis. Functionally, catalyzes the C6-oxidation step in brassinosteroids biosynthesis. Converts 6-deoxocastasterone (6-deoxoCS) to castasterone (CS). May also convert 6-deoxoteasterone (6-deoxoTE) to teasterone (TE), 3-dehydro-6-deoxoteasterone (6-deoxo3DT, 6-deoxo3DHT) to 3-dehydroteasterone (3DT, 3-DHT), and 6-deoxotyphasterol (6-deoxoTY) to typhasterol (TY), but not castasterone (CS) to brassinolide (BL). In Solanum lycopersicum (Tomato), this protein is Cytochrome P450 85A1.